A 917-amino-acid chain; its full sequence is MENILCFLNSYTETGLSPDSHCLDIDLNFICLSGLGLFILYLFYMVLTLYSSPTEKNNDTQKHQGRARRKRKSVTFKDRKSLQKEAEEERKLHSFLKSFGPPVSCSPLGQHHDTTLFRRLLCPDPVCRVCNRATADIQRLLSWESLKDAAPSVSPLASSASGAESSFTLASTPSATTPEDLILSSRPKPSPPPPLILSPDLITTLADLFSPSPLRDPLPPQPVSPLDSKFPIDHSPPQQLPFPLLPPHHIERVEPSLQPEASLSLNTIFSFGSTLCQDISQAVNRTDSCARHHGPPTPSALPPEDCTVTQSKSNLTVLKTFPEMLSLGGSGGSSTSAPTTKGIDHSCPASSEFSWWQPHAKDSFSSNFVPSDFMEELLTLHSSEASLGGHSVANIIQPVNISFLSHDIPALLERQVKRRGDFLMWKENGKKPGSFPTQLRPNYQLNSSRNMLTSTAVKHDLAESFPFWASKGKLEWQHIHQQPPYSKCFEDHLEQKYVQLFWGLPSLHSESLHPTVFVQHGRSSMFVFFNGITNTSMSHESPVLPPPQPLFLPSTQPLPLPQTLPRGQSLHLTQVKSLAQPQSPFPALPPSPLFLIRVCGVCFHRPQNEARSLMPSEINHLEWNVLQKVQESVWGLPSVVQKSQEDFCPPAPNPVLVRKSFKVHVPISIIPGDFPLSSEVRKKLEQHIRKRLIQRRWGLPRRIHESLSLLRPQNKISELSVSESIHGPLNISLVEGQRCNVLKKSASSFPRSFHERSSNMLSMENVGNYQGCSQETAPKNHLLHDPETSSEEDLRSNSERDLGTHMMHLSGNDSGVRLGQKQLENALTVHLSKKFEEINEGRMPGTVHSSWHSVKQTICLPEKSHSQIKHRNLAALVSEDHRVDTSQEMSFLSSNKQKMLEAHIKSFHMKPILNLSI.

Residues 29 to 49 (FICLSGLGLFILYLFYMVLTL) form a helical membrane-spanning segment. Disordered regions lie at residues 55 to 80 (EKNNDTQKHQGRARRKRKSVTFKDRK), 152 to 195 (SVSP…PPPL), and 773 to 797 (SQETAPKNHLLHDPETSSEEDLRSN). Positions 63–74 (HQGRARRKRKSV) are enriched in basic residues. Residues 152–163 (SVSPLASSASGA) are compositionally biased toward low complexity. Polar residues predominate over residues 164 to 177 (ESSFTLASTPSATT). Over residues 782–797 (LLHDPETSSEEDLRSN) the composition is skewed to basic and acidic residues.

This sequence belongs to the SPATA31 family.

The protein localises to the membrane. Functionally, may play a role in spermatogenesis. The polypeptide is Spermatogenesis-associated protein 31D3 (SPATA31D3) (Homo sapiens (Human)).